A 320-amino-acid polypeptide reads, in one-letter code: Ferrochelatase (320 aa).

Fe cation is bound by residues His-194 and Glu-275.

Belongs to the ferrochelatase family. In terms of assembly, monomer.

The protein resides in the cytoplasm. It catalyses the reaction heme b + 2 H(+) = protoporphyrin IX + Fe(2+). Its pathway is porphyrin-containing compound metabolism; protoheme biosynthesis; protoheme from protoporphyrin-IX: step 1/1. In terms of biological role, catalyzes the ferrous insertion into protoporphyrin IX. The sequence is that of Ferrochelatase from Escherichia coli (strain SMS-3-5 / SECEC).